The following is a 547-amino-acid chain: Elongator complex protein 3 (547 aa).

The Radical SAM core domain occupies 82–372 (RTASGIAVVA…YRVQRDIPMP (291 aa)). [4Fe-4S] cluster is bound by residues cysteine 99, cysteine 109, and cysteine 112. Serine 161 is subject to Phosphoserine. Lysine 164 is a binding site for acetyl-CoA. Lysine 229 is modified (N6-methyllysine). Residue tyrosine 251 is modified to Phosphotyrosine. The N-acetyltransferase domain maps to 396–547 (IQCRDVRTRE…QGPYMVKMLK (152 aa)). Residues 474–477 (ELHV), 497–499 (FGM), and tyrosine 530 each bind acetyl-CoA.

The protein belongs to the ELP3 family. In terms of assembly, component of the elongator complex which consists of ELP1, ELP2, ELP3, ELP4, ELP5 and ELP6. ELP1, ELP2 and ELP3 form the elongator core complex. Interacts with alpha-tubulin. [4Fe-4S] cluster serves as cofactor. Tyrosine-phosphorylated. Also serine/threonine-phosphorylated.

Its subcellular location is the cytoplasm. The protein resides in the nucleus. The enzyme catalyses uridine(34) in tRNA + acetyl-CoA + S-adenosyl-L-methionine + H2O = 5-(carboxymethyl)uridine(34) in tRNA + 5'-deoxyadenosine + L-methionine + CoA + 2 H(+). Its pathway is tRNA modification; 5-methoxycarbonylmethyl-2-thiouridine-tRNA biosynthesis. Functionally, catalytic tRNA acetyltransferase subunit of the elongator complex which is required for multiple tRNA modifications, including mcm5U (5-methoxycarbonylmethyl uridine), mcm5s2U (5-methoxycarbonylmethyl-2-thiouridine), and ncm5U (5-carbamoylmethyl uridine). In the elongator complex, acts as a tRNA uridine(34) acetyltransferase by mediating formation of carboxymethyluridine in the wobble base at position 34 in tRNAs. May also act as a protein lysine acetyltransferase by mediating acetylation of target proteins; such activity is however unclear in vivo and recent evidences suggest that ELP3 primarily acts as a tRNA acetyltransferase. Involved in neurogenesis: regulates the migration and branching of projection neurons in the developing cerebral cortex, through a process depending on alpha-tubulin acetylation. Required for acetylation of GJA1 in the developing cerebral cortex. The protein is Elongator complex protein 3 of Mus musculus (Mouse).